Here is a 481-residue protein sequence, read N- to C-terminus: Glutamyl-tRNA(Gln) amidotransferase subunit A (481 aa).

Residues lysine 74 and serine 149 each act as charge relay system in the active site. Residue serine 173 is the Acyl-ester intermediate of the active site.

Belongs to the amidase family. GatA subfamily. Heterotrimer of A, B and C subunits.

The enzyme catalyses L-glutamyl-tRNA(Gln) + L-glutamine + ATP + H2O = L-glutaminyl-tRNA(Gln) + L-glutamate + ADP + phosphate + H(+). Allows the formation of correctly charged Gln-tRNA(Gln) through the transamidation of misacylated Glu-tRNA(Gln) in organisms which lack glutaminyl-tRNA synthetase. The reaction takes place in the presence of glutamine and ATP through an activated gamma-phospho-Glu-tRNA(Gln). The protein is Glutamyl-tRNA(Gln) amidotransferase subunit A of Francisella tularensis subsp. holarctica (strain FTNF002-00 / FTA).